The following is an 802-amino-acid chain: Oleate activated transcription factor 3 (802 aa).

Positions C19 to C47 form a DNA-binding region, zn(2)-C6 fungal-type. The span at T749 to T768 shows a compositional bias: polar residues. The disordered stretch occupies residues T749 to G779.

Belongs to the OAF3 family.

It is found in the cytoplasm. Its subcellular location is the nucleus. It localises to the mitochondrion. Its function is as follows. Transcriptional inhibitor with a significantly increased number of target genes in response to oleate. The polypeptide is Oleate activated transcription factor 3 (OAF3) (Vanderwaltozyma polyspora (strain ATCC 22028 / DSM 70294 / BCRC 21397 / CBS 2163 / NBRC 10782 / NRRL Y-8283 / UCD 57-17) (Kluyveromyces polysporus)).